The primary structure comprises 179 residues: Transcription termination/antitermination protein NusG (179 aa).

In terms of domain architecture, KOW spans 130–157 (EGDVVQIIDGAFMGQEGRVVEIENNKVK).

Belongs to the NusG family.

In terms of biological role, participates in transcription elongation, termination and antitermination. The protein is Transcription termination/antitermination protein NusG of Streptococcus pyogenes serotype M1.